The chain runs to 321 residues: N-acetyllactosaminide alpha-1,3-galactosyltransferase-like 1 (321 aa).

Residues 1–6 (MQYKKE) are Cytoplasmic-facing. The helical; Signal-anchor for type II membrane protein transmembrane segment at 7–24 (TLLLILLAILLALTQRYS) threads the bilayer. The Lumenal segment spans residues 25-321 (RTKDHLQKMY…IKVAWQPRIT (297 aa)). Asn87 and Asn99 each carry an N-linked (GlcNAc...) asparagine glycan. Substrate contacts are provided by residues 95 to 100 (FATGNF), 187 to 189 (TAN), and 209 to 212 (HAWW). The Nucleophile role is filled by Glu277.

The protein belongs to the glycosyltransferase 6 family. The cofactor is Mn(2+).

It localises to the golgi apparatus. The protein localises to the golgi stack membrane. It carries out the reaction a beta-D-galactosyl-(1-&gt;4)-N-acetyl-beta-D-glucosaminyl derivative + UDP-alpha-D-galactose = an alpha-D-galactosyl-(1-&gt;3)-beta-D-galactosyl-(1-&gt;4)-N-acetyl-beta-D-glucosaminyl derivative + UDP + H(+). It participates in protein modification; protein glycosylation. Synthesizes the galactose-alpha(1,3)-galactose group by catalyzing the transfer of a galactose residue, with an alpha-1,3 linkage, on terminal lactosaminide (Gal-beta-1,4-GlcNAc-R) disaccharide borne by a glycoprotein or a glycolipid. This chain is N-acetyllactosaminide alpha-1,3-galactosyltransferase-like 1 (Ggta1l1), found in Rattus norvegicus (Rat).